The chain runs to 182 residues: Large ribosomal subunit protein uL10 (182 aa).

Belongs to the universal ribosomal protein uL10 family. In terms of assembly, part of the ribosomal stalk of the 50S ribosomal subunit. The N-terminus interacts with L11 and the large rRNA to form the base of the stalk. The C-terminus forms an elongated spine to which L12 dimers bind in a sequential fashion forming a multimeric L10(L12)X complex.

Forms part of the ribosomal stalk, playing a central role in the interaction of the ribosome with GTP-bound translation factors. The polypeptide is Large ribosomal subunit protein uL10 (Leptothrix cholodnii (strain ATCC 51168 / LMG 8142 / SP-6) (Leptothrix discophora (strain SP-6))).